A 265-amino-acid polypeptide reads, in one-letter code: Ribosomal RNA small subunit methyltransferase A (265 aa).

6 residues coordinate S-adenosyl-L-methionine: N13, L15, G39, E59, D87, and N108.

Belongs to the class I-like SAM-binding methyltransferase superfamily. rRNA adenine N(6)-methyltransferase family. RsmA subfamily.

It localises to the cytoplasm. The enzyme catalyses adenosine(1518)/adenosine(1519) in 16S rRNA + 4 S-adenosyl-L-methionine = N(6)-dimethyladenosine(1518)/N(6)-dimethyladenosine(1519) in 16S rRNA + 4 S-adenosyl-L-homocysteine + 4 H(+). Its function is as follows. Specifically dimethylates two adjacent adenosines (A1518 and A1519) in the loop of a conserved hairpin near the 3'-end of 16S rRNA in the 30S particle. May play a critical role in biogenesis of 30S subunits. This Aliarcobacter butzleri (strain RM4018) (Arcobacter butzleri) protein is Ribosomal RNA small subunit methyltransferase A.